Consider the following 86-residue polypeptide: MANSKSAKKRAIQAEKRRQHNASRRSMMRTYMKKTVAAIEAGDKEAATAAFAVVTPILDRMATKGLIHKNKAARHKSRFAAQIKAL.

The segment covering 1–27 has biased composition (basic residues); sequence MANSKSAKKRAIQAEKRRQHNASRRSM. A disordered region spans residues 1 to 28; that stretch reads MANSKSAKKRAIQAEKRRQHNASRRSMM.

Belongs to the bacterial ribosomal protein bS20 family.

In terms of biological role, binds directly to 16S ribosomal RNA. The polypeptide is Small ribosomal subunit protein bS20 (Vibrio parahaemolyticus serotype O3:K6 (strain RIMD 2210633)).